Here is a 207-residue protein sequence, read N- to C-terminus: MTIPSNRPRVGVLALQGDVREHLAALGDAGADAVPVRRADELATVDALVIPGGESTTMDKLARAFGLWEPLRARLAAGMPAFGSCAGMIMLAARVVDAAPGQETLGVLDITVRRNAFGRQVDSFEADIPLTGLDGGPLRAVFIRAPWVEETGPDVEVLGRVPSGRHAGRIVAVRQGAVLATAFHPELTADRRLHAFFVAMVAAQARV.

53–55 (GES) is an L-glutamine binding site. The active-site Nucleophile is Cys-85. Residues Arg-114 and 143–144 (IR) contribute to the L-glutamine site. Residues His-184 and Glu-186 each act as charge relay system in the active site.

The protein belongs to the glutaminase PdxT/SNO family. As to quaternary structure, in the presence of PdxS, forms a dodecamer of heterodimers. Only shows activity in the heterodimer.

The enzyme catalyses aldehydo-D-ribose 5-phosphate + D-glyceraldehyde 3-phosphate + L-glutamine = pyridoxal 5'-phosphate + L-glutamate + phosphate + 3 H2O + H(+). The catalysed reaction is L-glutamine + H2O = L-glutamate + NH4(+). Its pathway is cofactor biosynthesis; pyridoxal 5'-phosphate biosynthesis. In terms of biological role, catalyzes the hydrolysis of glutamine to glutamate and ammonia as part of the biosynthesis of pyridoxal 5'-phosphate. The resulting ammonia molecule is channeled to the active site of PdxS. The sequence is that of Pyridoxal 5'-phosphate synthase subunit PdxT from Acidothermus cellulolyticus (strain ATCC 43068 / DSM 8971 / 11B).